A 24-amino-acid polypeptide reads, in one-letter code: Unknown protein 6 (24 aa).

In Lonomia obliqua (Moth), this protein is Unknown protein 6.